The following is a 255-amino-acid chain: Ribosomal RNA small subunit methyltransferase G 2 (255 aa).

S-adenosyl-L-methionine contacts are provided by glycine 90, phenylalanine 95, and arginine 155. Over residues 233–245 (EDEGEELLMDELS) the composition is skewed to acidic residues. Positions 233–255 (EDEGEELLMDELSNEEKRRWAKY) are disordered. The segment covering 246-255 (NEEKRRWAKY) has biased composition (basic and acidic residues).

Belongs to the methyltransferase superfamily. RNA methyltransferase RsmG family.

It is found in the cytoplasm. It carries out the reaction guanosine(527) in 16S rRNA + S-adenosyl-L-methionine = N(7)-methylguanosine(527) in 16S rRNA + S-adenosyl-L-homocysteine. Functionally, specifically methylates the N7 position of guanine in position 527 of 16S rRNA. The protein is Ribosomal RNA small subunit methyltransferase G 2 of Bdellovibrio bacteriovorus (strain ATCC 15356 / DSM 50701 / NCIMB 9529 / HD100).